The primary structure comprises 198 residues: MSNRGQLSIEMVILVLAVLVSGSYVALDLSKGAFETTAVNDVQESSYCGFTPDFGATSIDKALVKLTTGIININPNAAVTNNEFNATYTNTTDNTVVTYSLDNVHPNLIKNYADGTIVKVPLNETWKNFTASNIILRMKSDYVCTINGENVSMESNCFEITAPLGSDSFDFQMSAGTGAGQYYLRLVDQEVTIEFSLE.

The propeptide occupies M1–G5. The short motif at Q6–L14 is the QXSXEXXXL element.

The N-terminus is probably cleaved by the prepilin peptidase EppA, which recognizes the class III signal sequence.

Its subcellular location is the secreted. It is found in the cell surface. The protein localises to the fimbrium. This chain is Probable minor pilin MMP0709, found in Methanococcus maripaludis (strain DSM 14266 / JCM 13030 / NBRC 101832 / S2 / LL).